Here is a 497-residue protein sequence, read N- to C-terminus: Probable small intestine urate exporter (497 aa).

5 N-linked (GlcNAc...) asparagine glycosylation sites follow: Asn-47, Asn-56, Asn-66, Asn-75, and Asn-90. The next 10 membrane-spanning stretches (helical) occupy residues 149 to 169 (SFLT…LIVL), 171 to 191 (IVQG…WVKW), 203 to 223 (IAGS…GLLC), 230 to 250 (YVFY…FPLI), 292 to 312 (LPLW…YTIM), 332 to 352 (ILSA…GLLA), 368 to 388 (KLFT…LPWV), 398 to 418 (FLVL…VNFL), 431 to 451 (LLQV…GFFI), and 461 to 481 (NVFL…LIFG).

It belongs to the major facilitator superfamily. Sodium/anion cotransporter family. Abundantly expressed in pancreas, liver, colon and small intestine, less in kidney. Not detected in the adrenal glands, brain, placenta, heart, testis, skeletal muscle, and lungs.

The protein localises to the apical cell membrane. It catalyses the reaction 3 Na(+)(out) + phosphate(out) = 3 Na(+)(in) + phosphate(in). The enzyme catalyses urate(out) + n chloride(in) = urate(in) + n chloride(out). It carries out the reaction L-thyroxine(out) = L-thyroxine(in). The catalysed reaction is 3,3',5-triiodo-L-thyronine(out) = 3,3',5-triiodo-L-thyronine(in). Acts as a membrane potential-dependent organic anion transporter, the transport requires a low concentration of chloride ions. Mediates chloride-dependent transport of urate. Mediates sodium-independent high affinity transport of thyroid hormones including L-thyroxine (T4) and 3,3',5-triiodo-L-thyronine (T3). Can actively transport inorganic phosphate into cells via Na(+) cotransport. The chain is Probable small intestine urate exporter (SLC17A4) from Homo sapiens (Human).